A 295-amino-acid chain; its full sequence is Cuticle collagen 3A3 (295 aa).

Residues Ala81 to Pro278 form a disordered region. Composition is skewed to pro residues over residues Pro97–Pro109 and Ala146–Asp160. 3 triple-helical region regions span residues Gly98–Pro127, Gly147–Asp203, and Gly212–Cys277. Positions Gln172–Lys182 are enriched in low complexity. Positions Pro217–Glu228 are enriched in pro residues. Residues Pro229–Lys244 are compositionally biased toward low complexity. Positions Arg261–Pro271 are enriched in pro residues.

The protein belongs to the cuticular collagen family.

Nematode cuticles are composed largely of collagen-like proteins. The cuticle functions both as an exoskeleton and as a barrier to protect the worm from its environment. The protein is Cuticle collagen 3A3 (3A3) of Haemonchus contortus (Barber pole worm).